Consider the following 379-residue polypeptide: Chaperone protein DnaJ (379 aa).

Positions 7 to 72 (CYYETLEVER…DKRAAYDRYG (66 aa)) constitute a J domain. The segment at 135–213 (GKTAQIEIPV…CTGSGRVTKE (79 aa)) adopts a CR-type zinc-finger fold. Zn(2+) contacts are provided by Cys-148, Cys-151, Cys-165, Cys-168, Cys-187, Cys-190, Cys-201, and Cys-204. 4 CXXCXGXG motif repeats span residues 148 to 155 (CEACSGTG), 165 to 172 (CSTCGGAG), 187 to 194 (CPSCQGRG), and 201 to 208 (CPSCTGSG).

This sequence belongs to the DnaJ family. As to quaternary structure, homodimer. Zn(2+) serves as cofactor.

The protein resides in the cytoplasm. Its function is as follows. Participates actively in the response to hyperosmotic and heat shock by preventing the aggregation of stress-denatured proteins and by disaggregating proteins, also in an autonomous, DnaK-independent fashion. Unfolded proteins bind initially to DnaJ; upon interaction with the DnaJ-bound protein, DnaK hydrolyzes its bound ATP, resulting in the formation of a stable complex. GrpE releases ADP from DnaK; ATP binding to DnaK triggers the release of the substrate protein, thus completing the reaction cycle. Several rounds of ATP-dependent interactions between DnaJ, DnaK and GrpE are required for fully efficient folding. Also involved, together with DnaK and GrpE, in the DNA replication of plasmids through activation of initiation proteins. The polypeptide is Chaperone protein DnaJ (Rhodopseudomonas palustris (strain ATCC BAA-98 / CGA009)).